Consider the following 516-residue polypeptide: Probable inorganic phosphate transporter 1-6 (516 aa).

N-acetylalanine is present on alanine 2. Over 2 to 25 the chain is Cytoplasmic; it reads ANEEQGSILKALDVAKTQWYHVTA. The helical transmembrane segment at 26 to 46 threads the bilayer; the sequence is VVVSGMGFFTDSYDLFVISLI. Residues 47-71 are Extracellular-facing; the sequence is TKLLGRIYYQVPGSSSPGSLPDGIS. A helical transmembrane segment spans residues 72–92; it reads AAVSGVAFAGTFIGQIFFGCL. Topologically, residues 93-100 are cytoplasmic; it reads GDKLGRKR. The chain crosses the membrane as a helical span at residues 101-121; the sequence is VYGLTLLIMTICSICSGLSLG. Residues 122 to 132 are Extracellular-facing; it reads RDPKTVMVTLC. A helical transmembrane segment spans residues 133–153; the sequence is FFRFWLGFGIGGDYPLSATIM. Over 154 to 162 the chain is Cytoplasmic; it reads SEYSNKRTR. The chain crosses the membrane as a helical span at residues 163–183; it reads GAFIAAVFGMQGIGILAAGAV. The Extracellular portion of the chain corresponds to 184–212; sequence SLLVSAVFESKFPSRAYILDGAASTVPQA. Residues 213-233 traverse the membrane as a helical segment; it reads DYVWRIILMVGALPALLTYYW. The Cytoplasmic segment spans residues 234-293; it reads RMKMPETARYTALVSKNAEQAALDMTKVLNVDIEASAAKNDQARVSSDEFGLFSMKFLRR. A helical membrane pass occupies residues 294-314; the sequence is HGLHLLGTASTWFLLDIAFYS. Topologically, residues 315–349 are extracellular; sequence QNLFQKDIFTTIGWLPSAKTMNAIQELYMIAKAQT. A helical transmembrane segment spans residues 350 to 370; sequence IIACCSTVPGYFFTVGFIDYM. Residues 371 to 374 are Cytoplasmic-facing; sequence GRKK. Residues 375–395 form a helical membrane-spanning segment; the sequence is IQIMGFAMMTIFMLSLAIPYH. At 396–403 the chain is on the extracellular side; sequence HWTLPANR. A helical membrane pass occupies residues 404 to 424; the sequence is IGFVVLYSFTFFFSNFGPNAT. Over 425–442 the chain is Cytoplasmic; that stretch reads TFIVPAEIFPARIRSTCH. A helical transmembrane segment spans residues 443–463; sequence GISAASGKAGAMVGSFGFSAL. Residues 464-471 lie on the Extracellular side of the membrane; that stretch reads VKALGMSN. The helical transmembrane segment at 472 to 492 threads the bilayer; the sequence is TLYIMAGINLLGLLLTFTIPE. The Cytoplasmic segment spans residues 493 to 516; it reads TNGKSLEELSGETEPEKIKEKIVV.

It belongs to the major facilitator superfamily. Phosphate:H(+) symporter (TC 2.A.1.9) family. Expressed in anthers, tapetumand mature pollen and, to a lower extent, in hydathodes and vascular tissues of cotyledons of flowering plants.

It localises to the membrane. Its function is as follows. High-affinity transporter for external inorganic phosphate. The protein is Probable inorganic phosphate transporter 1-6 (PHT1-6) of Arabidopsis thaliana (Mouse-ear cress).